A 236-amino-acid polypeptide reads, in one-letter code: Homeobox protein notochord (236 aa).

The homeobox DNA-binding region spans 138-197 (MKRIRTVFTPEQLEKLEKEFLKQQYMVGTERVDLASTLNLTETQVKVWFQNRRIKWRKQS). Positions 209–236 (GVIPADSSDHTDDSRETEEDEDDLDVEL) are disordered. Acidic residues predominate over residues 223 to 236 (RETEEDEDDLDVEL).

As to expression, expressed throughout the embryo during pre-gastrula stages. Localized to the dorsal lip of the blastopore (Spemann organizer) during early gastrulation, after which expression continues in tissues derived from the organizer. Expressed in the notochord during mid-gastrulation. During neurulation, expressed in the notochord, archenteron roof and the prospective floor plate. Also expressed in the region that will become the epiphysis, the pineal body precursor. By the early tailbud stages, expression is limited to posterior notochord and floor plate before becoming restricted to the tip of the tail in the tadpole.

It is found in the nucleus. Functionally, transcriptional repressor. Plays a fundamental role in notochord formation, acting within the mesodermal region. In Xenopus laevis (African clawed frog), this protein is Homeobox protein notochord (noto).